The primary structure comprises 608 residues: Sensor protein kinase WalK (608 aa).

2 consecutive transmembrane segments (helical) span residues 14–34 (LVIV…LYFT) and 183–203 (IFIV…FFIA). Residues 204 to 256 (RTITKPITDMRNQTVEMSRGNYTQRVKIYGNDEIGELALAFNNLSKRVQEAQA) enclose the HAMP domain. The 71-residue stretch at 261–331 (EKRRLDSVIT…EIQENNDSFL (71 aa)) folds into the PAS domain. Zn(2+)-binding residues include H271, D274, H364, and E368. Residues 314–378 (LEDEFKLEEI…QQQVERERRE (65 aa)) form the PAC domain. In terms of domain architecture, Histidine kinase spans 382–600 (NVSHELRTPL…SIFITLPCEV (219 aa)). Position 385 is a phosphohistidine; by autocatalysis (H385).

As to quaternary structure, forms homodimers. Forms homooligomers. In terms of processing, autophosphorylated.

Its subcellular location is the cell membrane. It carries out the reaction ATP + protein L-histidine = ADP + protein N-phospho-L-histidine.. By zinc. Zinc-binding negatively regulates WalK kinase activity and thus autophosphorylation. In terms of biological role, member of the two-component regulatory system WalK/WalR that regulates genes involved in cell wall metabolism, virulence regulation, biofilm production, oxidative stress resistance and antibiotic resistance via direct or indirect regulation of autolysins. Functions as a sensor protein kinase which is autophosphorylated at a histidine residue in the dimerization domain and transfers its phosphate group to the conserved aspartic acid residue in the regulatory domain of WalR. In turn, WalR binds to the upstream promoter regions of the target genes to positively and negatively regulate their expression. The chain is Sensor protein kinase WalK (walK) from Staphylococcus aureus (strain Mu3 / ATCC 700698).